The primary structure comprises 203 residues: Probable GTP-binding protein EngB (203 aa).

The EngB-type G domain occupies 21 to 196; sequence GAPEIAFLGR…WKKIFEAAGT (176 aa). GTP is bound by residues 29–36, 55–59, 79–82, 146–149, and 175–177; these read GRSNVGKS, GRTQT, DLPG, TKID, and FSA. Serine 36 and threonine 57 together coordinate Mg(2+).

The protein belongs to the TRAFAC class TrmE-Era-EngA-EngB-Septin-like GTPase superfamily. EngB GTPase family. It depends on Mg(2+) as a cofactor.

In terms of biological role, necessary for normal cell division and for the maintenance of normal septation. The protein is Probable GTP-binding protein EngB of Koribacter versatilis (strain Ellin345).